A 179-amino-acid polypeptide reads, in one-letter code: Large ribosomal subunit protein uL5 (179 aa).

It belongs to the universal ribosomal protein uL5 family. In terms of assembly, part of the 50S ribosomal subunit; part of the 5S rRNA/L5/L18/L25 subcomplex. Contacts the 5S rRNA and the P site tRNA. Forms a bridge to the 30S subunit in the 70S ribosome.

Functionally, this is one of the proteins that bind and probably mediate the attachment of the 5S RNA into the large ribosomal subunit, where it forms part of the central protuberance. In the 70S ribosome it contacts protein S13 of the 30S subunit (bridge B1b), connecting the 2 subunits; this bridge is implicated in subunit movement. Contacts the P site tRNA; the 5S rRNA and some of its associated proteins might help stabilize positioning of ribosome-bound tRNAs. The chain is Large ribosomal subunit protein uL5 from Pseudomonas entomophila (strain L48).